The chain runs to 197 residues: Superoxide dismutase [Fe] (197 aa).

Fe cation is bound by residues H26, H75, D157, and H161.

This sequence belongs to the iron/manganese superoxide dismutase family. In terms of assembly, homotetramer. It depends on Fe cation as a cofactor.

The catalysed reaction is 2 superoxide + 2 H(+) = H2O2 + O2. Functionally, destroys superoxide anion radicals which are normally produced within the cells and which are toxic to biological systems. The polypeptide is Superoxide dismutase [Fe] (Cupriavidus metallidurans (strain ATCC 43123 / DSM 2839 / NBRC 102507 / CH34) (Ralstonia metallidurans)).